Consider the following 208-residue polypeptide: Probable adenylyl-sulfate kinase (208 aa).

Residue 38–45 (GLSGSGKS) participates in ATP binding. The Phosphoserine intermediate role is filled by Ser112.

The protein belongs to the APS kinase family.

The enzyme catalyses adenosine 5'-phosphosulfate + ATP = 3'-phosphoadenylyl sulfate + ADP + H(+). It participates in sulfur metabolism; hydrogen sulfide biosynthesis; sulfite from sulfate: step 2/3. Catalyzes the synthesis of activated sulfate. The polypeptide is Probable adenylyl-sulfate kinase (Halalkalibacterium halodurans (strain ATCC BAA-125 / DSM 18197 / FERM 7344 / JCM 9153 / C-125) (Bacillus halodurans)).